Reading from the N-terminus, the 945-residue chain is Valine--tRNA ligase (945 aa).

Residues 42 to 52 carry the 'HIGH' region motif; the sequence is PNVTGTLHMGH. Positions 552–556 match the 'KMSKS' region motif; it reads KMSKS. An ATP-binding site is contributed by K555. The stretch at 879 to 945 forms a coiled coil; sequence DKAAETARLS…VQNQLAKLKD (67 aa).

The protein belongs to the class-I aminoacyl-tRNA synthetase family. ValS type 1 subfamily. As to quaternary structure, monomer.

Its subcellular location is the cytoplasm. The catalysed reaction is tRNA(Val) + L-valine + ATP = L-valyl-tRNA(Val) + AMP + diphosphate. Its function is as follows. Catalyzes the attachment of valine to tRNA(Val). As ValRS can inadvertently accommodate and process structurally similar amino acids such as threonine, to avoid such errors, it has a 'posttransfer' editing activity that hydrolyzes mischarged Thr-tRNA(Val) in a tRNA-dependent manner. This Neisseria gonorrhoeae (strain ATCC 700825 / FA 1090) protein is Valine--tRNA ligase.